We begin with the raw amino-acid sequence, 164 residues long: Ribosome maturation factor RimM (164 aa).

The PRC barrel domain maps to 90-161 (KGSYFIADLI…TVTIKPLEIW (72 aa)).

It belongs to the RimM family. Binds ribosomal protein uS19.

It is found in the cytoplasm. In terms of biological role, an accessory protein needed during the final step in the assembly of 30S ribosomal subunit, possibly for assembly of the head region. Essential for efficient processing of 16S rRNA. May be needed both before and after RbfA during the maturation of 16S rRNA. It has affinity for free ribosomal 30S subunits but not for 70S ribosomes. The protein is Ribosome maturation factor RimM of Clostridium botulinum (strain Langeland / NCTC 10281 / Type F).